The sequence spans 82 residues: MRLVVCLVFLAPFALVCHGQVYKGGYTRPIPRPPPFVRPLPGGPIGPYNGCPVSCRGISFSQARSCCSRLGRCCHVGKGYSG.

A signal peptide spans 1-19; the sequence is MRLVVCLVFLAPFALVCHG. The residue at position 20 (Q20) is a Pyrrolidone carboxylic acid. 3 disulfide bridges follow: C51–C66, C55–C73, and C67–C74. S81 is subject to Serine amide.

Belongs to the penaeidin family.

The protein resides in the cytoplasmic granule. Functionally, antibacterial and antifungal activity. Presents chitin-binding activity. This Penaeus vannamei (Whiteleg shrimp) protein is Penaeidin-3e.